Here is a 158-residue protein sequence, read N- to C-terminus: Ribosome maturation factor RimP (158 aa).

It belongs to the RimP family.

The protein resides in the cytoplasm. Required for maturation of 30S ribosomal subunits. This Pseudomonas syringae pv. tomato (strain ATCC BAA-871 / DC3000) protein is Ribosome maturation factor RimP.